A 562-amino-acid chain; its full sequence is Sulfite reductase [NADPH] hemoprotein beta-component (562 aa).

[4Fe-4S] cluster contacts are provided by C428, C434, C473, and C477. C477 provides a ligand contact to siroheme.

Belongs to the nitrite and sulfite reductase 4Fe-4S domain family. As to quaternary structure, alpha(8)-beta(8). The alpha component is a flavoprotein, the beta component is a hemoprotein. The cofactor is siroheme. Requires [4Fe-4S] cluster as cofactor.

It catalyses the reaction hydrogen sulfide + 3 NADP(+) + 3 H2O = sulfite + 3 NADPH + 4 H(+). It functions in the pathway sulfur metabolism; hydrogen sulfide biosynthesis; hydrogen sulfide from sulfite (NADPH route): step 1/1. Component of the sulfite reductase complex that catalyzes the 6-electron reduction of sulfite to sulfide. This is one of several activities required for the biosynthesis of L-cysteine from sulfate. The chain is Sulfite reductase [NADPH] hemoprotein beta-component from Myxococcus xanthus (strain DK1622).